The chain runs to 261 residues: Enolase-phosphatase E1 (261 aa).

The Mg(2+) site is built by D16 and E18. Substrate-binding positions include 153–154 (SS) and K187. D212 is a Mg(2+) binding site.

It belongs to the HAD-like hydrolase superfamily. MasA/MtnC family. Monomer. The cofactor is Mg(2+).

It is found in the cytoplasm. It localises to the nucleus. It carries out the reaction 5-methylsulfanyl-2,3-dioxopentyl phosphate + H2O = 1,2-dihydroxy-5-(methylsulfanyl)pent-1-en-3-one + phosphate. It functions in the pathway amino-acid biosynthesis; L-methionine biosynthesis via salvage pathway; L-methionine from S-methyl-5-thio-alpha-D-ribose 1-phosphate: step 3/6. Its pathway is amino-acid biosynthesis; L-methionine biosynthesis via salvage pathway; L-methionine from S-methyl-5-thio-alpha-D-ribose 1-phosphate: step 4/6. Functionally, bifunctional enzyme that catalyzes the enolization of 2,3-diketo-5-methylthiopentyl-1-phosphate (DK-MTP-1-P) into the intermediate 2-hydroxy-3-keto-5-methylthiopentenyl-1-phosphate (HK-MTPenyl-1-P), which is then dephosphorylated to form the acireductone 1,2-dihydroxy-3-keto-5-methylthiopentene (DHK-MTPene). In Salmo salar (Atlantic salmon), this protein is Enolase-phosphatase E1 (enoph1).